Reading from the N-terminus, the 163-residue chain is 2,3-dimethylmalate dehydratase small subunit (163 aa).

It belongs to the LeuD family. LeuD type 2 subfamily. In terms of assembly, heterodimer of a large and a small subunit.

It carries out the reaction (2R,3S)-2,3-dimethylmalate = dimethylmaleate + H2O. It participates in cofactor degradation; nicotinate degradation; propanoate and pyruvate from 6-hydroxynicotinate: step 7/8. The sequence is that of 2,3-dimethylmalate dehydratase small subunit from Eubacterium barkeri (Clostridium barkeri).